A 763-amino-acid polypeptide reads, in one-letter code: Hormone-sensitive lipase (763 aa).

The short motif at 350–352 is the Involved in the stabilization of the negatively charged intermediate by the formation of the oxyanion hole element; sequence HGG. The active site involves Ser-424. Ser-552 carries the post-translational modification Phosphoserine. Ser-554 is subject to Phosphoserine; by AMPK. Phosphoserine occurs at positions 595, 627, and 649. Basic and acidic residues predominate over residues 616–627; sequence AREEAEAKEGLS. The interval 616-652 is disordered; it reads AREEAEAKEGLSAKDGSSRVSNAFPEGFHPRRTSQGA. Active-site residues include Asp-692 and His-722.

It belongs to the 'GDXG' lipolytic enzyme family. In terms of assembly, monomer and homodimer. Interacts with CAVIN1 in the adipocyte cytoplasm. Interacts with PLIN5. Post-translationally, phosphorylation by AMPK reduces its translocation towards the lipid droplets.

It is found in the cell membrane. Its subcellular location is the membrane. The protein localises to the caveola. It localises to the cytoplasm. The protein resides in the cytosol. It is found in the lipid droplet. It carries out the reaction a diacylglycerol + H2O = a monoacylglycerol + a fatty acid + H(+). The catalysed reaction is a triacylglycerol + H2O = a diacylglycerol + a fatty acid + H(+). It catalyses the reaction a monoacylglycerol + H2O = glycerol + a fatty acid + H(+). The enzyme catalyses Hydrolyzes glycerol monoesters of long-chain fatty acids.. It carries out the reaction 1,2-di-(9Z-octadecenoyl)-glycerol + (9Z)-octadecenoate + H(+) = 1,2,3-tri-(9Z-octadecenoyl)-glycerol + H2O. The catalysed reaction is 2,3-di-(9Z)-octadecenoyl-sn-glycerol + H2O = 2-(9Z-octadecenoyl)-glycerol + (9Z)-octadecenoate + H(+). It catalyses the reaction cholesteryl (9Z-octadecenoate) + H2O = cholesterol + (9Z)-octadecenoate + H(+). The enzyme catalyses 1,2,3-tri-(9Z-octadecenoyl)-glycerol + H2O = di-(9Z)-octadecenoylglycerol + (9Z)-octadecenoate + H(+). It carries out the reaction all-trans-retinyl hexadecanoate + H2O = all-trans-retinol + hexadecanoate + H(+). The catalysed reaction is 1,2-di-(9Z-octadecenoyl)-glycerol + H2O = (9Z-octadecenoyl)-glycerol + (9Z)-octadecenoate + H(+). It catalyses the reaction 2-(5Z,8Z,11Z,14Z-eicosatetraenoyl)-glycerol + H2O = glycerol + (5Z,8Z,11Z,14Z)-eicosatetraenoate + H(+). The enzyme catalyses 1-(9Z-octadecenoyl)-glycerol + H2O = glycerol + (9Z)-octadecenoate + H(+). It carries out the reaction 2-(9Z-octadecenoyl)-glycerol + H2O = glycerol + (9Z)-octadecenoate + H(+). The catalysed reaction is 1-O-hexadecyl-2-acetyl-sn-glycerol + H2O = 1-O-hexadecyl-sn-glycerol + acetate + H(+). It catalyses the reaction 1,2-di-(9Z-octadecenoyl)-sn-glycerol + H2O = (9Z-octadecenoyl)-glycerol + (9Z)-octadecenoate + H(+). The enzyme catalyses 1,3-di-(9Z-octadecenoyl)-glycerol + H2O = 1-(9Z-octadecenoyl)-glycerol + (9Z)-octadecenoate + H(+). It carries out the reaction 1,2-di-(9Z-octadecenoyl)-glycerol + H2O = 2-(9Z-octadecenoyl)-glycerol + (9Z)-octadecenoate + H(+). Its pathway is glycerolipid metabolism; triacylglycerol degradation. Its function is as follows. Lipase with broad substrate specificity, catalyzing the hydrolysis of triacylglycerols (TAGs), diacylglycerols (DAGs), monoacylglycerols (MAGs), cholesteryl esters and retinyl esters. Shows a preferential hydrolysis of DAGs over TAGs and MAGs. Preferentially hydrolyzes fatty acid (FA) esters at the sn-3 position of the glycerol backbone in DAGs and FA esters at the sn-1 and sn-2 positions of the glycerol backbone in TAGs. Catalyzes the hydrolysis of 2-arachidonoylglycerol, an endocannabinoid and of 2-acetyl monoalkylglycerol ether, the penultimate precursor of the pathway for de novo synthesis of platelet-activating factor. In adipose tissue and heart, it primarily hydrolyzes stored triglycerides to free fatty acids, while in steroidogenic tissues, it principally converts cholesteryl esters to free cholesterol for steroid hormone production. The sequence is that of Hormone-sensitive lipase (LIPE) from Ictidomys tridecemlineatus (Thirteen-lined ground squirrel).